Here is a 204-residue protein sequence, read N- to C-terminus: Imidazoleglycerol-phosphate dehydratase (204 aa).

The protein belongs to the imidazoleglycerol-phosphate dehydratase family.

Its subcellular location is the cytoplasm. The enzyme catalyses D-erythro-1-(imidazol-4-yl)glycerol 3-phosphate = 3-(imidazol-4-yl)-2-oxopropyl phosphate + H2O. It participates in amino-acid biosynthesis; L-histidine biosynthesis; L-histidine from 5-phospho-alpha-D-ribose 1-diphosphate: step 6/9. In Corynebacterium jeikeium (strain K411), this protein is Imidazoleglycerol-phosphate dehydratase.